The sequence spans 749 residues: Catalase-peroxidase 2 (749 aa).

The signal sequence occupies residues 1–27; it reads MFKRTIPLFAAFTLAISPSVFPNYAYA. Positions 107–229 form a cross-link, tryptophyl-tyrosyl-methioninium (Trp-Tyr) (with M-255); that stretch reads WHAAGTYRIY…LAATVMGLIY (123 aa). The active-site Proton acceptor is the H108. A cross-link (tryptophyl-tyrosyl-methioninium (Tyr-Met) (with W-107)) is located at residues 229–255; that stretch reads YVNPEGPNGVPDPLAAAEKIRETFGRM. H270 contacts heme b.

This sequence belongs to the peroxidase family. Peroxidase/catalase subfamily. As to quaternary structure, homodimer or homotetramer. Requires heme b as cofactor. In terms of processing, formation of the three residue Trp-Tyr-Met cross-link is important for the catalase, but not the peroxidase activity of the enzyme.

The catalysed reaction is H2O2 + AH2 = A + 2 H2O. It catalyses the reaction 2 H2O2 = O2 + 2 H2O. In terms of biological role, bifunctional enzyme with both catalase and broad-spectrum peroxidase activity. This Legionella pneumophila (strain Paris) protein is Catalase-peroxidase 2.